We begin with the raw amino-acid sequence, 520 residues long: Putative lipase ATG15 (520 aa).

The Cytoplasmic portion of the chain corresponds to 1–14 (MLHKSPSRKRFASP). A helical; Signal-anchor for type II membrane protein membrane pass occupies residues 15-35 (LHLGCILTLTVLCLIAYYFAL). The Lumenal portion of the chain corresponds to 36 to 520 (PDYLSVGKSS…WLGFCTKYEL (485 aa)). 3 N-linked (GlcNAc...) asparagine glycosylation sites follow: asparagine 173, asparagine 202, and asparagine 208. The Charge relay system role is filled by serine 332.

This sequence belongs to the AB hydrolase superfamily. Lipase family. As to quaternary structure, binds to both phosphatidylinositol (PI) and phosphatidylinositol 3,5-bisphosphate (PIP2). Post-translationally, glycosylated.

The protein localises to the endosome. It is found in the multivesicular body membrane. The protein resides in the prevacuolar compartment membrane. It carries out the reaction a triacylglycerol + H2O = a diacylglycerol + a fatty acid + H(+). Lipase which is essential for lysis of subvacuolar cytoplasm to vacuole targeted bodies and intravacuolar autophagic bodies. Involved in the lysis of intravacuolar multivesicular body (MVB) vesicles. The intravacuolar membrane disintegration by ATG15 is critical to life span extension. In Saccharomyces cerevisiae (strain ATCC 204508 / S288c) (Baker's yeast), this protein is Putative lipase ATG15 (ATG15).